We begin with the raw amino-acid sequence, 290 residues long: 4-hydroxybenzoate octaprenyltransferase (290 aa).

Helical transmembrane passes span 23 to 43 (IGTL…GKGV), 46 to 66 (LSIL…GCVV), 99 to 119 (LFVV…AMTI), 141 to 161 (LPQF…YAAV), 170 to 190 (WLLL…YAMV), 213 to 233 (LIVG…GYLT), 234 to 254 (QMSG…IHQQ), and 268 to 288 (AFMD…LSYW).

This sequence belongs to the UbiA prenyltransferase family. Mg(2+) is required as a cofactor.

The protein localises to the cell inner membrane. The catalysed reaction is all-trans-octaprenyl diphosphate + 4-hydroxybenzoate = 4-hydroxy-3-(all-trans-octaprenyl)benzoate + diphosphate. Its pathway is cofactor biosynthesis; ubiquinone biosynthesis. Its function is as follows. Catalyzes the prenylation of para-hydroxybenzoate (PHB) with an all-trans polyprenyl group. Mediates the second step in the final reaction sequence of ubiquinone-8 (UQ-8) biosynthesis, which is the condensation of the polyisoprenoid side chain with PHB, generating the first membrane-bound Q intermediate 3-octaprenyl-4-hydroxybenzoate. This chain is 4-hydroxybenzoate octaprenyltransferase, found in Serratia proteamaculans (strain 568).